Reading from the N-terminus, the 156-residue chain is Small ribosomal subunit protein bS16 (156 aa).

Low complexity-rich tracts occupy residues 113–123 (AESGTTAAATT) and 137–156 (EAPAEAAEAPAEAADAASES). Residues 113-156 (AESGTTAAATTPKKKKAPKKDEAAEAPAEAAEAPAEAADAASES) form a disordered region.

It belongs to the bacterial ribosomal protein bS16 family.

The polypeptide is Small ribosomal subunit protein bS16 (Mycolicibacterium smegmatis (strain ATCC 700084 / mc(2)155) (Mycobacterium smegmatis)).